Here is a 133-residue protein sequence, read N- to C-terminus: uncharacterized protein (133 aa).

2 helical membrane passes run 13–33 (FLLSVVGSGNSLSILNGLFLS) and 73–93 (FGNPLVTSLNIMYSLFYLLLL).

Its subcellular location is the membrane. This is an uncharacterized protein from Saccharomyces cerevisiae (strain ATCC 204508 / S288c) (Baker's yeast).